The following is a 164-amino-acid chain: MTGPAVQDQELDQFDKKILDIIQTGFPLEPRPYAVIGDAVGLTEAEALARVRALKERKIIRRLGANFNSWKLGFRSTLCAAKVPEDKFDEFVAEVNSHVGVTHNYLRAHAYNVWFTFIGPSWEEVCSTLDSITQKTGIPILNLPAEELYKIRVDFKMDEDPAAD.

It belongs to the Ahb/Nir family. In terms of assembly, forms a heterodimer composed of AhbA and AhbB.

It catalyses the reaction siroheme + 2 H(+) = 12,18-didecarboxysiroheme + 2 CO2. It functions in the pathway porphyrin-containing compound metabolism; protoheme biosynthesis. Its function is as follows. Involved in siroheme-dependent heme b biosynthesis. Catalyzes the decarboxylation of siroheme into didecarboxysiroheme. This Oleidesulfovibrio alaskensis (strain ATCC BAA-1058 / DSM 17464 / G20) (Desulfovibrio alaskensis) protein is Siroheme decarboxylase alpha subunit.